The sequence spans 172 residues: 3-hydroxydecanoyl-[acyl-carrier-protein] dehydratase (172 aa).

Residue H71 is part of the active site.

The protein belongs to the thioester dehydratase family. FabA subfamily. As to quaternary structure, homodimer.

It is found in the cytoplasm. The catalysed reaction is a (3R)-hydroxyacyl-[ACP] = a (2E)-enoyl-[ACP] + H2O. The enzyme catalyses (3R)-hydroxydecanoyl-[ACP] = (2E)-decenoyl-[ACP] + H2O. It carries out the reaction (2E)-decenoyl-[ACP] = (3Z)-decenoyl-[ACP]. Its pathway is lipid metabolism; fatty acid biosynthesis. Necessary for the introduction of cis unsaturation into fatty acids. Catalyzes the dehydration of (3R)-3-hydroxydecanoyl-ACP to E-(2)-decenoyl-ACP and then its isomerization to Z-(3)-decenoyl-ACP. Can catalyze the dehydratase reaction for beta-hydroxyacyl-ACPs with saturated chain lengths up to 16:0, being most active on intermediate chain length. In Escherichia fergusonii (strain ATCC 35469 / DSM 13698 / CCUG 18766 / IAM 14443 / JCM 21226 / LMG 7866 / NBRC 102419 / NCTC 12128 / CDC 0568-73), this protein is 3-hydroxydecanoyl-[acyl-carrier-protein] dehydratase.